We begin with the raw amino-acid sequence, 378 residues long: Spermidine/putrescine import ATP-binding protein PotA (378 aa).

The ABC transporter domain maps to 18–248; it reads VQLAGIRKCF…PKNLFVAGFI (231 aa). 50–57 provides a ligand contact to ATP; the sequence is GPSGCGKT.

The protein belongs to the ABC transporter superfamily. Spermidine/putrescine importer (TC 3.A.1.11.1) family. As to quaternary structure, the complex is composed of two ATP-binding proteins (PotA), two transmembrane proteins (PotB and PotC) and a solute-binding protein (PotD).

Its subcellular location is the cell inner membrane. The enzyme catalyses ATP + H2O + polyamine-[polyamine-binding protein]Side 1 = ADP + phosphate + polyamineSide 2 + [polyamine-binding protein]Side 1.. Its function is as follows. Part of the ABC transporter complex PotABCD involved in spermidine/putrescine import. Responsible for energy coupling to the transport system. The protein is Spermidine/putrescine import ATP-binding protein PotA of Shigella boydii serotype 4 (strain Sb227).